A 199-amino-acid polypeptide reads, in one-letter code: dITP/XTP pyrophosphatase (199 aa).

Substrate is bound at residue Ser7–Lys12. The active-site Proton acceptor is the Asp68. Asp68 contributes to the Mg(2+) binding site. Substrate is bound by residues Ala69, Phe154–Asp157, Lys177, and His182–Arg183.

It belongs to the HAM1 NTPase family. As to quaternary structure, homodimer. Requires Mg(2+) as cofactor.

The catalysed reaction is XTP + H2O = XMP + diphosphate + H(+). The enzyme catalyses dITP + H2O = dIMP + diphosphate + H(+). It catalyses the reaction ITP + H2O = IMP + diphosphate + H(+). In terms of biological role, pyrophosphatase that catalyzes the hydrolysis of nucleoside triphosphates to their monophosphate derivatives, with a high preference for the non-canonical purine nucleotides XTP (xanthosine triphosphate), dITP (deoxyinosine triphosphate) and ITP. Seems to function as a house-cleaning enzyme that removes non-canonical purine nucleotides from the nucleotide pool, thus preventing their incorporation into DNA/RNA and avoiding chromosomal lesions. In Verminephrobacter eiseniae (strain EF01-2), this protein is dITP/XTP pyrophosphatase.